The sequence spans 118 residues: UPF0295 protein BcerKBAB4_0454 (118 aa).

2 helical membrane passes run 12–32 and 43–63; these read IRTFALSLVFIGLFIAYLGVF and FMMVGFLAVIASTVVYFWIGM.

This sequence belongs to the UPF0295 family.

It localises to the cell membrane. This is UPF0295 protein BcerKBAB4_0454 from Bacillus mycoides (strain KBAB4) (Bacillus weihenstephanensis).